Here is a 549-residue protein sequence, read N- to C-terminus: Lysine-specific demethylase JMJ31 (549 aa).

Positions 125 to 296 (DYRPGQIYLA…SNMPEHMDSY (172 aa)) constitute a JmjC domain. The Fe cation site is built by H184, D186, and H266.

This sequence belongs to the JARID1 histone demethylase family. Fe(2+) is required as a cofactor. In terms of tissue distribution, mostly expressed in leaves and inflorescences, and, to a lower extent, in roots, siliques and stems.

The protein localises to the nucleus. In terms of biological role, may function as histone H3 lysine demethylase and be involved in regulation of gene expression. The chain is Lysine-specific demethylase JMJ31 from Arabidopsis thaliana (Mouse-ear cress).